The primary structure comprises 97 residues: Putative CC-type chemokine U83 (97 aa).

2 cysteine pairs are disulfide-bonded: Cys-32–Cys-62 and Cys-33–Cys-76.

Belongs to the intercrine beta (chemokine CC) family. Highly divergent.

The polypeptide is Putative CC-type chemokine U83 (U83) (Human herpesvirus 6A (strain Uganda-1102) (HHV-6 variant A)).